Consider the following 116-residue polypeptide: Cysteine proteinase inhibitor 1 (116 aa).

A signal peptide spans 1-22 (MVPKPLSLLLLLLLALSAAVVG). Positions 30–89 (GGWRPIENLNSAEVQDVAQFAVSEHNKQANDELQYQSVVRGYTQVVAGTNYRLVIAAKDG) constitute a Cystatin domain. Positions 73–77 (QVVAG) match the Secondary area of contact motif. Asn-109 is a glycosylation site (N-linked (GlcNAc...) asparagine).

Belongs to the cystatin family. Phytocystatin subfamily.

It is found in the secreted. Specific inhibitor of papain family cysteine proteinases. This is Cysteine proteinase inhibitor 1 from Actinidia chinensis var. chinensis (Chinese soft-hair kiwi).